Consider the following 83-residue polypeptide: MQTAYWVMVMMMVWITAPLSEGGKLNNVIRGLVPDDVTPKRISQSLISRRRFDSRIMFVPSCIWKTCPSYLHGDNYDLKEKDK.

The first 22 residues, 1-22, serve as a signal peptide directing secretion; sequence MQTAYWVMVMMMVWITAPLSEG. Residues 23 to 55 constitute a propeptide that is removed on maturation; the sequence is GKLNNVIRGLVPDDVTPKRISQSLISRRRFDSR. The cysteines at positions 62 and 67 are disulfide-linked. Trp64 carries the D-tryptophan modification. Residue Pro68 is modified to 4-hydroxyproline. The propeptide occupies 71-83; that stretch reads LHGDNYDLKEKDK.

This sequence belongs to the conotoxin C superfamily. Consomatin family. Expressed by the venom duct.

The protein localises to the secreted. Moderately activates human somatostatin receptors (SSTR) with a preferential activation of SSTR1 and SSTR4. In vivo, does not cause behavioral changes in mice within a few minutes of intracranial injection, but causes a progressive loss of movement thereafter. Four to five hours after injection, mice recover, even with the highest dose tested. Shows antinociception and antihyperalgesia activities in two mouse models of acute pain, most probably by acting outside the central nervous system. In Conus raulsilvai (Sea snail), this protein is Consomatin Rs1.